Here is a 108-residue protein sequence, read N- to C-terminus: uncharacterized protein (108 aa).

The next 2 helical transmembrane spans lie at 5-27 (TVYG…QLEI) and 83-105 (IFLM…LNIF).

The protein resides in the membrane. This is an uncharacterized protein from Schizosaccharomyces pombe (strain 972 / ATCC 24843) (Fission yeast).